Consider the following 324-residue polypeptide: Sperm acrosome membrane-associated protein 6 (324 aa).

The signal sequence occupies residues M1–A26. The short motif at C27 to C30 is the CXXC motif element. 6 disulfides stabilise this stretch: C27-C139, C30-C142, C41-C55, C124-C147, C128-C153, and C170-C226. Residues C27–L295 are Extracellular-facing. Residues C139–C142 carry the CXXC motif motif. Residues P150–A236 enclose the Ig-like domain. N243 is a glycosylation site (N-linked (GlcNAc...) asparagine). A helical membrane pass occupies residues F296–F316. At F317–N324 the chain is on the cytoplasmic side.

This sequence belongs to the SPACA6 family. As to quaternary structure, forms a complex with IZUMO1 and TMEM81 on spermatocyte cell membrane required for fertilization. Detected at the sperm head, equatorial region, neck and midpiece (at protein level). Expressed in testis.

Its subcellular location is the cytoplasmic vesicle. It localises to the secretory vesicle. The protein localises to the acrosome membrane. Functionally, sperm protein required for fusion of sperm with the egg membrane during fertilization. May regulate the expression of sperm surface protein DCST2. This chain is Sperm acrosome membrane-associated protein 6, found in Homo sapiens (Human).